The following is a 177-amino-acid chain: Nucleoside triphosphate/diphosphate phosphatase (177 aa).

Arg23 functions as the Proton donor in the catalytic mechanism. Residues Asn87, Asp103, Asp105, Asp107, Asp120, and Glu123 each contribute to the Mg(2+) site.

It belongs to the Ntdp family. The cofactor is Mg(2+).

The catalysed reaction is a ribonucleoside 5'-triphosphate + H2O = a ribonucleoside 5'-diphosphate + phosphate + H(+). The enzyme catalyses a ribonucleoside 5'-diphosphate + H2O = a ribonucleoside 5'-phosphate + phosphate + H(+). Has nucleoside phosphatase activity towards nucleoside triphosphates and nucleoside diphosphates. The polypeptide is Nucleoside triphosphate/diphosphate phosphatase (Streptococcus pyogenes serotype M3 (strain ATCC BAA-595 / MGAS315)).